A 478-amino-acid polypeptide reads, in one-letter code: Alpha-1,3-mannosyl-glycoprotein 4-beta-N-acetylglucosaminyltransferase C (478 aa).

Residues 1–25 are Cytoplasmic-facing; sequence MLKFYQMKYIFQILDKMRCLRKRST. A helical; Signal-anchor for type II membrane protein membrane pass occupies residues 26–43; sequence VSFLGVLVVFLLFMNLYI. At 44–478 the chain is on the lumenal side; it reads EDSYVLEGDK…IIRSISIWTS (435 aa). Asn-84 and Asn-215 each carry an N-linked (GlcNAc...) asparagine glycan.

The protein belongs to the glycosyltransferase 54 family. Requires a divalent metal cation as cofactor.

The protein localises to the golgi apparatus membrane. It catalyses the reaction N(4)-{beta-D-GlcNAc-(1-&gt;2)-alpha-D-Man-(1-&gt;3)-[beta-D-GlcNAc-(1-&gt;2)-alpha-D-Man-(1-&gt;6)]-beta-D-Man-(1-&gt;4)-beta-D-GlcNAc-(1-&gt;4)-beta-D-GlcNAc}-L-asparaginyl-[protein] + UDP-N-acetyl-alpha-D-glucosamine = N(4)-{beta-D-GlcNAc-(1-&gt;2)-[beta-D-GlcNAc-(1-&gt;4)]-alpha-D-Man-(1-&gt;3)-[beta-D-GlcNAc-(1-&gt;2)-alpha-D-Man-(1-&gt;6)]-beta-D-Man-(1-&gt;4)-beta-D-GlcNAc-(1-&gt;4)-beta-D-GlcNAc}-L-asparaginyl-[protein] + UDP + H(+). It functions in the pathway protein modification; protein glycosylation. In terms of biological role, glycosyltransferase that participates in the transfer of N-acetylglucosamine (GlcNAc) to the core mannose residues of N-linked glycans. Catalyzes the formation of the GlcNAcbeta1-4 branch on the GlcNAcbeta1-2Manalpha1-3 arm of the core structure of N-linked glycans. Essential for the production of tri- and tetra-antennary N-linked sugar chains. Does not catalyze the transfer of GlcNAc to the Manalpha1-6 arm to form GlcNAcBeta1-4Manalpha1-6 linkage ('GnT-VI' activity). In Mus musculus (Mouse), this protein is Alpha-1,3-mannosyl-glycoprotein 4-beta-N-acetylglucosaminyltransferase C (Mgat4c).